The following is a 1078-amino-acid chain: Lon protease homolog, mitochondrial (1078 aa).

The N-terminal 27 residues, 1–27, are a transit peptide targeting the mitochondrion; it reads MIKASKCNKPRALFLVRVSIPRTFIRN. Basic and acidic residues predominate over residues 71 to 123; the sequence is SEKEKQPSTDKSNDKDKPSRKEKGKDKEKENEEKKDINMDEKYEINEETDTKP. Positions 71–179 are disordered; the sequence is SEKEKQPSTD…KEFLSPSDSG (109 aa). Residues 127–157 show a composition bias toward low complexity; that stretch reads PNNPVSSKSNISSSSGGDNNNNNNNNNNNND. A compositionally biased stretch (basic and acidic residues) spans 158–172; that stretch reads SDGKNDDGSPKDKEF. Positions 182-400 constitute a Lon N-terminal domain; that stretch reads PPFLAIAMKD…LSLQLLQVEA (219 aa). 548 to 555 lines the ATP pocket; it reads GPPGTGKT. The tract at residues 792–825 is disordered; the sequence is NSPIEYIQSNTEVKAETTTESQQEQEKEKEKDEE. A compositionally biased stretch (basic and acidic residues) spans 815–825; the sequence is EQEKEKEKDEE. Residues 861 to 1049 enclose the Lon proteolytic domain; it reads TLNPGVATGL…SEVFEHLFQG (189 aa). Residues S955 and K998 contribute to the active site.

It belongs to the peptidase S16 family. Homohexamer or homoheptamer. Organized in a ring with a central cavity.

It is found in the mitochondrion matrix. It catalyses the reaction Hydrolysis of proteins in presence of ATP.. ATP-dependent serine protease that mediates the selective degradation of misfolded, unassembled or oxidatively damaged polypeptides as well as certain short-lived regulatory proteins in the mitochondrial matrix. May also have a chaperone function in the assembly of inner membrane protein complexes. Participates in the regulation of mitochondrial gene expression and in the maintenance of the integrity of the mitochondrial genome. Binds to mitochondrial DNA in a site-specific manner. This is Lon protease homolog, mitochondrial from Candida albicans (strain SC5314 / ATCC MYA-2876) (Yeast).